The sequence spans 116 residues: Nucleoid-associated protein PMT9312_0020 (116 aa).

It belongs to the YbaB/EbfC family. In terms of assembly, homodimer.

It is found in the cytoplasm. The protein resides in the nucleoid. Functionally, binds to DNA and alters its conformation. May be involved in regulation of gene expression, nucleoid organization and DNA protection. In Prochlorococcus marinus (strain MIT 9312), this protein is Nucleoid-associated protein PMT9312_0020.